A 233-amino-acid chain; its full sequence is Cilia- and flagella-associated protein 299 (233 aa).

Its subcellular location is the cytoplasm. It localises to the nucleus. Functionally, may be involved in spermatogenesis. This is Cilia- and flagella-associated protein 299 from Homo sapiens (Human).